Here is a 249-residue protein sequence, read N- to C-terminus: 2,3-bisphosphoglycerate-dependent phosphoglycerate mutase (249 aa).

Substrate contacts are provided by residues Arg8–Asn15, Thr21–Gly22, Arg60, Glu87–Tyr90, Lys98, Arg114–Arg115, and Gly183–Asn184. The active-site Tele-phosphohistidine intermediate is His9. Glu87 functions as the Proton donor/acceptor in the catalytic mechanism.

Belongs to the phosphoglycerate mutase family. BPG-dependent PGAM subfamily. Homodimer.

It catalyses the reaction (2R)-2-phosphoglycerate = (2R)-3-phosphoglycerate. Its pathway is carbohydrate degradation; glycolysis; pyruvate from D-glyceraldehyde 3-phosphate: step 3/5. Catalyzes the interconversion of 2-phosphoglycerate and 3-phosphoglycerate. The polypeptide is 2,3-bisphosphoglycerate-dependent phosphoglycerate mutase (Burkholderia mallei (strain NCTC 10247)).